The following is a 91-amino-acid chain: Ragulator complex protein LAMTOR5 homolog (91 aa).

It belongs to the LAMTOR5 family. In terms of assembly, part of the Ragulator complex.

Its subcellular location is the cytoplasm. It is found in the lysosome. Functionally, regulator of the TOR pathway, a signaling cascade that promotes cell growth in response to growth factors, energy levels, and amino acids. As part of the Ragulator complex, may activate the TOR signaling cascade in response to amino acids. The polypeptide is Ragulator complex protein LAMTOR5 homolog (Nematostella vectensis (Starlet sea anemone)).